We begin with the raw amino-acid sequence, 579 residues long: Zinc finger-containing ubiquitin peptidase 1 (579 aa).

The segment at 2 to 25 adopts a C2H2-type 1 zinc-finger fold; that stretch reads LSCDICGETVSSEPDMKAHLLIVH. The segment at 30–53 adopts a C2H2-type 2; atypical zinc-finger fold; it reads VICPFCKLSGVNYDEMCFHIETAH. 2 consecutive C2H2-type zinc fingers follow at residues 155–178 and 194–216; these read PECPFCGKIEDNSQDMETHVKTKH and YDCPMCGLVCTNYHILQEHVDLH. The tract at residues 227 to 249 is MIU; the sequence is NRVQCSRDLELAQQLQQEEDRKR. Residues 250-275 are zUBD/ZHA; the sequence is RSEESRQEMEEFQKLQRQYGLDNSGG. Lysine 263 carries the N6-acetyllysine modification. Catalysis depends on cysteine 361, which acts as the Nucleophile. Histidine 492 serves as the catalytic Proton acceptor. Aspartate 513 is an active-site residue.

Belongs to the peptidase C78 family. ZUFSP subfamily. In terms of assembly, interacts with RPA1 and RPA2.

It is found in the cytoplasm. The protein localises to the nucleus. It catalyses the reaction Thiol-dependent hydrolysis of ester, thioester, amide, peptide and isopeptide bonds formed by the C-terminal Gly of ubiquitin (a 76-residue protein attached to proteins as an intracellular targeting signal).. Functionally, deubiquitinase with endodeubiquitinase activity that specifically interacts with and cleaves 'Lys-63'-linked long polyubiquitin chains. Shows only weak activity against 'Lys-11' and 'Lys-48'-linked chains. Plays an important role in genome stability pathways, functioning to prevent spontaneous DNA damage and also promote cellular survival in response to exogenous DNA damage. Modulates the ubiquitination status of replication protein A (RPA) complex proteins in response to replication stress. In Bos taurus (Bovine), this protein is Zinc finger-containing ubiquitin peptidase 1.